The chain runs to 145 residues: Transcriptional regulator SlyA (145 aa).

The HTH marR-type domain occupies 2–135 (ELPLGSDLAR…LALLVARLEK (134 aa)). Residues 49–72 (QIQLAKAIGIEQPSLVRTLDQLEE) constitute a DNA-binding region (H-T-H motif).

The protein belongs to the SlyA family. As to quaternary structure, homodimer.

Its function is as follows. Transcription regulator that can specifically activate or repress expression of target genes. This is Transcriptional regulator SlyA from Pectobacterium carotovorum subsp. carotovorum (strain PC1).